We begin with the raw amino-acid sequence, 197 residues long: Thymidylate kinase (197 aa).

Gly7–Ser14 lines the ATP pocket.

Belongs to the thymidylate kinase family.

It carries out the reaction dTMP + ATP = dTDP + ADP. Its function is as follows. Phosphorylation of dTMP to form dTDP in both de novo and salvage pathways of dTTP synthesis. In Fervidobacterium nodosum (strain ATCC 35602 / DSM 5306 / Rt17-B1), this protein is Thymidylate kinase.